A 274-amino-acid polypeptide reads, in one-letter code: Cytochrome b-c1 complex subunit Rieske, mitochondrial (274 aa).

Over 79 to 103 (SHTDVKVPDFYDYRRLEVLDSTKSS) the chain is Mitochondrial matrix. The helical transmembrane segment at 104–140 (RESSEARKGFSYLVTAVTTVGVAYAAKNVVTQFISSM) threads the bilayer. The Mitochondrial intermembrane portion of the chain corresponds to 141–274 (SASADVLAMA…FTGDDVVVVG (134 aa)). A Rieske domain is found at 187 to 272 (EAAVELSQLR…YEFTGDDVVV (86 aa)). [2Fe-2S] cluster-binding residues include C217, H219, C236, H239, and S241. A disulfide bond links C222 and C238.

Belongs to the Rieske iron-sulfur protein family. In terms of assembly, component of the ubiquinol-cytochrome c oxidoreductase (cytochrome b-c1 complex, complex III, CIII), a multisubunit enzyme composed of 11 subunits. The complex is composed of 3 respiratory subunits cytochrome b, cytochrome c1 and Rieske protein UQCRFS1, 2 core protein subunits UQCRC1/QCR1 and UQCRC2/QCR2, and 6 low-molecular weight protein subunits UQCRH/QCR6, UQCRB/QCR7, UQCRQ/QCR8, UQCR10/QCR9, UQCR11/QCR10 and subunit 9, the cleavage product of Rieske protein UQCRFS1. The complex exists as an obligatory dimer and forms supercomplexes (SCs) in the inner mitochondrial membrane with NADH-ubiquinone oxidoreductase (complex I, CI) and cytochrome c oxidase (complex IV, CIV), resulting in different assemblies (supercomplex SCI(1)III(2)IV(1) and megacomplex MCI(2)III(2)IV(2)). Incorporation of the Rieske protein UQCRFS1 is the penultimate step in complex III assembly. Interacts with TTC19, which is involved in the clearance of UQCRFS1 fragments. As to quaternary structure, component of the ubiquinol-cytochrome c oxidoreductase (cytochrome b-c1 complex, complex III, CIII). Subunit 9 corresponds to the mitochondrial targeting sequence (MTS) of Rieske protein UQCRFS1. It is retained after processing and incorporated inside complex III, where it remains bound to the complex and localizes between the 2 core subunits UQCRC1/QCR1 and UQCRC2/QCR2. It depends on [2Fe-2S] cluster as a cofactor. In terms of processing, proteolytic processing is necessary for the correct insertion of UQCRFS1 in the complex III dimer. Several fragments are generated during UQCRFS1 insertion, most probably due to the endogenous matrix-processing peptidase (MPP) activity of the 2 core protein subunits UQCRC1/QCR1 and UQCRC2/QCR2, which are homologous to the 2 mitochondrial-processing peptidase (MPP) subunits beta-MPP and alpha-MPP respectively. The action of the protease is also necessary for the clearance of the UQCRFS1 fragments.

The protein resides in the mitochondrion inner membrane. The catalysed reaction is a quinol + 2 Fe(III)-[cytochrome c](out) = a quinone + 2 Fe(II)-[cytochrome c](out) + 2 H(+)(out). Component of the ubiquinol-cytochrome c oxidoreductase, a multisubunit transmembrane complex that is part of the mitochondrial electron transport chain which drives oxidative phosphorylation. The respiratory chain contains 3 multisubunit complexes succinate dehydrogenase (complex II, CII), ubiquinol-cytochrome c oxidoreductase (cytochrome b-c1 complex, complex III, CIII) and cytochrome c oxidase (complex IV, CIV), that cooperate to transfer electrons derived from NADH and succinate to molecular oxygen, creating an electrochemical gradient over the inner membrane that drives transmembrane transport and the ATP synthase. The cytochrome b-c1 complex catalyzes electron transfer from ubiquinol to cytochrome c, linking this redox reaction to translocation of protons across the mitochondrial inner membrane, with protons being carried across the membrane as hydrogens on the quinol. In the process called Q cycle, 2 protons are consumed from the matrix, 4 protons are released into the intermembrane space and 2 electrons are passed to cytochrome c. The Rieske protein is a catalytic core subunit containing a [2Fe-2S] iron-sulfur cluster. It cycles between 2 conformational states during catalysis to transfer electrons from the quinol bound in the Q(0) site in cytochrome b to cytochrome c1. Incorporation of UQCRFS1 is the penultimate step in complex III assembly. Functionally, component of the ubiquinol-cytochrome c oxidoreductase (cytochrome b-c1 complex, complex III, CIII). UQCRFS1 undergoes proteolytic processing once it is incorporated in the complex III dimer. One of the fragments, called subunit 9, corresponds to its mitochondrial targeting sequence (MTS). The proteolytic processing is necessary for the correct insertion of UQCRFS1 in the complex III dimer, but the persistence of UQCRFS1-derived fragments may prevent newly imported UQCRFS1 to be processed and assembled into complex III and is detrimental for the complex III structure and function. This chain is Cytochrome b-c1 complex subunit Rieske, mitochondrial (UQCRFS1), found in Chlorocebus aethiops (Green monkey).